We begin with the raw amino-acid sequence, 580 residues long: Acyl-coenzyme A synthetase ACSM4, mitochondrial (580 aa).

The N-terminal 22 residues, 1–22, are a transit peptide targeting the mitochondrion; that stretch reads MKVLLHCQRLRFIWLAKPAGRH. ATP is bound by residues 229-237, 368-373, Asp455, Arg470, and Lys566; these read TSGTTGSPK and EGYGQT.

The protein belongs to the ATP-dependent AMP-binding enzyme family. Mg(2+) serves as cofactor. Mn(2+) is required as a cofactor.

The protein localises to the mitochondrion. The catalysed reaction is a medium-chain fatty acid + ATP + CoA = a medium-chain fatty acyl-CoA + AMP + diphosphate. It catalyses the reaction hexanoate + ATP + CoA = hexanoyl-CoA + AMP + diphosphate. The enzyme catalyses octanoate + ATP + CoA = octanoyl-CoA + AMP + diphosphate. It carries out the reaction decanoate + ATP + CoA = decanoyl-CoA + AMP + diphosphate. The catalysed reaction is dodecanoate + ATP + CoA = dodecanoyl-CoA + AMP + diphosphate. Functionally, catalyzes the activation of fatty acids by CoA to produce an acyl-CoA, the first step in fatty acid metabolism. Capable of activating medium-chain fatty acids with a preference for C6-12 fatty acids. The protein is Acyl-coenzyme A synthetase ACSM4, mitochondrial (Acsm4) of Mus musculus (Mouse).